Here is a 940-residue protein sequence, read N- to C-terminus: Protein translocase subunit SecA 1 (940 aa).

ATP contacts are provided by residues Gln83, 101–105, and Asp490; that span reads GEGKT. The tract at residues 856-940 is disordered; sequence AEQGGTATAA…AKPPKSVKRR (85 aa).

This sequence belongs to the SecA family. Monomer and homodimer. Part of the essential Sec protein translocation apparatus which comprises SecA, SecYEG and auxiliary proteins SecDF. Other proteins may also be involved.

Its subcellular location is the cell membrane. It localises to the cytoplasm. It catalyses the reaction ATP + H2O + cellular proteinSide 1 = ADP + phosphate + cellular proteinSide 2.. Its function is as follows. Part of the Sec protein translocase complex. Interacts with the SecYEG preprotein conducting channel. Has a central role in coupling the hydrolysis of ATP to the transfer of proteins into and across the cell membrane, serving as an ATP-driven molecular motor driving the stepwise translocation of polypeptide chains across the membrane. The protein is Protein translocase subunit SecA 1 of Mycolicibacterium paratuberculosis (strain ATCC BAA-968 / K-10) (Mycobacterium paratuberculosis).